Here is a 139-residue protein sequence, read N- to C-terminus: Nucleoside diphosphate kinase (139 aa).

Lysine 10, phenylalanine 58, arginine 86, threonine 92, arginine 104, and asparagine 114 together coordinate ATP. Histidine 117 acts as the Pros-phosphohistidine intermediate in catalysis.

This sequence belongs to the NDK family. As to quaternary structure, homotetramer. Mg(2+) is required as a cofactor.

It is found in the cytoplasm. The enzyme catalyses a 2'-deoxyribonucleoside 5'-diphosphate + ATP = a 2'-deoxyribonucleoside 5'-triphosphate + ADP. The catalysed reaction is a ribonucleoside 5'-diphosphate + ATP = a ribonucleoside 5'-triphosphate + ADP. Functionally, major role in the synthesis of nucleoside triphosphates other than ATP. The ATP gamma phosphate is transferred to the NDP beta phosphate via a ping-pong mechanism, using a phosphorylated active-site intermediate. This is Nucleoside diphosphate kinase from Mycolicibacterium smegmatis (strain ATCC 700084 / mc(2)155) (Mycobacterium smegmatis).